The following is a 380-amino-acid chain: Ceramide synthase 2 (380 aa).

Residues 1–40 are Lumenal-facing; the sequence is MLQTLHDYFWWERLWLPVNLTWADLEDRDGRVYAKASDLY. N19 carries an N-linked (GlcNAc...) asparagine glycan. A helical membrane pass occupies residues 41–61; it reads ITLPLALLFLIIRYFFELYVA. Positions 67–128 are homeobox-like; that stretch reads LLNVKEKTRL…RRRRNQDRPS (62 aa). The TLC domain occupies 131-332; the sequence is KKFREASWRF…ILRMAHKFIT (202 aa). 4 helical membrane passes run 140–160, 181–201, 209–229, and 264–284; these read FTFYLIAFIAGTAVIVDKPWF, WYYMIELSFYWSLLFSIASDV, QIIHHVATIILISFSWFANYV, and IFIVFAIVFIITRLVILPFWI. The Last loop motif signature appears at 291-300; that stretch reads YPLELYPAFF. The helical transmembrane segment at 304 to 324 threads the bilayer; it reads FFNFMMGVLQLLHIFWAYLIL. The Cytoplasmic segment spans residues 325–380; the sequence is RMAHKFITGKVVEDERSDREETESSEGEEAAAGGGAKNRPLANGHPILNNNHRKND. The disordered stretch occupies residues 338-380; sequence DERSDREETESSEGEEAAAGGGAKNRPLANGHPILNNNHRKND. S341 bears the Phosphoserine mark. Residues 344–353 show a composition bias toward acidic residues; sequence EETESSEGEE. T346 carries the post-translational modification Phosphothreonine. A phosphoserine mark is found at S348 and S349.

Interacts with ATP6V0C, ASGR1, ASGR2 and SLC22A1/OCT1. Interacts with ELOV1, HSD17B12 and TECR. Interacts with NDUFS2. In terms of processing, acetylated. Deacetylation by SIRT3 increases enzyme activity and promotes mitochondrial ceramide accumulation. Post-translationally, phosphorylated at the C-terminus by CK2, leading to increase the ceramide synthase activity.

The protein resides in the endoplasmic reticulum membrane. The enzyme catalyses a very long-chain fatty acyl-CoA + a sphingoid base = an N-(very-long-chain fatty acyl)-sphingoid base + CoA + H(+). The catalysed reaction is docosanoyl-CoA + sphinganine = N-docosanoylsphinganine + CoA + H(+). It carries out the reaction tetracosanoyl-CoA + sphinganine = N-tetracosanoylsphinganine + CoA + H(+). It catalyses the reaction hexacosanoyl-CoA + sphinganine = N-hexacosanoylsphinganine + CoA + H(+). The enzyme catalyses (15Z)-tetracosenoyl-CoA + sphinganine = N-(15Z-tetracosenoyl)-sphinganine + CoA + H(+). The catalysed reaction is 2-hydroxytetracosanoyl-CoA + sphinganine = N-(2-hydroxytetracosanoyl)-sphinganine + CoA + H(+). It carries out the reaction 2-hydroxydocosanoyl-CoA + sphinganine = N-(2-hydroxydocosanoyl)-sphinganine + CoA + H(+). It catalyses the reaction 2-hydroxytetracosenoyl-CoA + sphinganine = N-(2-hydroxytetracosenoyl)-sphinganine + CoA + H(+). The enzyme catalyses tetracosenoyl-CoA + sphinganine = an N-tetracosenoylsphinganine + CoA + H(+). The catalysed reaction is hexacosenoyl-CoA + sphinganine = N-hexacosenoylsphinganine + CoA + H(+). It carries out the reaction tetracosanoyl-CoA + sphing-4-enine = N-tetracosanoyl-sphing-4-enine + CoA + H(+). It catalyses the reaction tetracosenoyl-CoA + sphing-4-enine = N-(tetracosenoyl)-sphing-4-enine + CoA + H(+). The enzyme catalyses heptadecasphing-4-enine + tetracosanoyl-CoA = N-tetracosanoyl-heptadecasphing-4-enine + CoA + H(+). The catalysed reaction is a fatty acyl-CoA + sphing-4-enine = an N-acylsphing-4-enine + CoA + H(+). It carries out the reaction sphing-4-enine + hexadecanoyl-CoA = N-hexadecanoylsphing-4-enine + CoA + H(+). It catalyses the reaction sphing-4-enine + octadecanoyl-CoA = N-octadecanoylsphing-4-enine + CoA + H(+). The enzyme catalyses eicosanoyl-CoA + sphing-4-enine = N-eicosanoyl-sphing-4-enine + CoA + H(+). The catalysed reaction is sphinganine + hexadecanoyl-CoA = N-hexadecanoylsphinganine + CoA + H(+). It carries out the reaction sphinganine + octadecanoyl-CoA = N-(octadecanoyl)-sphinganine + CoA + H(+). It catalyses the reaction sphinganine + (9Z)-octadecenoyl-CoA = N-(9Z-octadecenoyl)-sphinganine + CoA + H(+). The enzyme catalyses eicosanoyl-CoA + sphinganine = N-eicosanoylsphinganine + CoA + H(+). It functions in the pathway lipid metabolism; sphingolipid metabolism. With respect to regulation, ceramide synthase activity is inhibited by sphingosine-1-phosphate. Its function is as follows. Ceramide synthase that catalyzes the transfer of the acyl chain from acyl-CoA to a sphingoid base, with high selectivity toward very-long-chain fatty acyl-CoA (chain length C22-C27). N-acylates sphinganine and sphingosine bases to form dihydroceramides and ceramides in de novo synthesis and salvage pathways, respectively. Plays a non-redundant role in the synthesis of ceramides with very-long-chain fatty acids in kidney, liver and brain. Regulates the abundance of myelin-specific sphingolipids galactosylceramide and sulfatide that affects myelin sheath architecture and motor neuron functions. This is Ceramide synthase 2 from Bos taurus (Bovine).